Consider the following 418-residue polypeptide: Tyrosine--tRNA ligase (418 aa).

Residue Y34 participates in L-tyrosine binding. The 'HIGH' region motif lies at 39-48 (PTADSLHLGH). The L-tyrosine site is built by Y169 and Q173. Residues 229–233 (KFGKS) carry the 'KMSKS' region motif. Position 232 (K232) interacts with ATP. One can recognise an S4 RNA-binding domain in the interval 352 to 418 (LNIVDMLVTA…GKKKYAVLTY (67 aa)).

Belongs to the class-I aminoacyl-tRNA synthetase family. TyrS type 1 subfamily. As to quaternary structure, homodimer.

Its subcellular location is the cytoplasm. It catalyses the reaction tRNA(Tyr) + L-tyrosine + ATP = L-tyrosyl-tRNA(Tyr) + AMP + diphosphate + H(+). Catalyzes the attachment of tyrosine to tRNA(Tyr) in a two-step reaction: tyrosine is first activated by ATP to form Tyr-AMP and then transferred to the acceptor end of tRNA(Tyr). This chain is Tyrosine--tRNA ligase, found in Streptococcus equi subsp. zooepidemicus (strain H70).